We begin with the raw amino-acid sequence, 270 residues long: Phosphonoacetaldehyde hydrolase (270 aa).

The active-site Nucleophile is the Asp-11. Positions 11 and 13 each coordinate Mg(2+). The active-site Schiff-base intermediate with substrate is Lys-53. Asp-187 contributes to the Mg(2+) binding site.

Belongs to the HAD-like hydrolase superfamily. PhnX family. Homodimer. Requires Mg(2+) as cofactor.

It catalyses the reaction phosphonoacetaldehyde + H2O = acetaldehyde + phosphate + H(+). Functionally, involved in phosphonate degradation. The sequence is that of Phosphonoacetaldehyde hydrolase from Salmonella choleraesuis (strain SC-B67).